The primary structure comprises 4306 residues: Cytoplasmic dynein 2 heavy chain 1 (4306 aa).

The stem stretch occupies residues 1-1650 (MAGSLGDVRK…YVQMVDSELQ (1650 aa)). 145 to 152 (LGIVLRKS) contacts ATP. Positions 669–696 (KELEGYIQKLQNAAERLATENRRLRKWH) form a coiled coil. AAA regions lie at residues 1651–1875 (YTYE…VLRG), 1941–2161 (SALK…KQND), 2249–2505 (LTAD…WVLG), and 2617–2862 (HYGR…ESCK). Residues 1689–1696 (GPAGTGKT), 1979–1986 (GPSGAGKS), 2291–2298 (GPEGCGKG), and 2655–2662 (GRSGVGRR) contribute to the ATP site. A stalk region spans residues 2880–3168 (AISSSKKKEL…AEVSKAQETI (289 aa)). 3 coiled-coil regions span residues 2896 to 2981 (LQAG…KEVQ), 3108 to 3199 (LETE…LATL), and 3407 to 3441 (IQHE…SLLE). 2 AAA regions span residues 3243-3472 (LCTE…LIQD) and 3689-3904 (MALF…VIDR).

This sequence belongs to the dynein heavy chain family. In terms of assembly, the cytoplasmic dynein complex 2 is probably composed by a heavy chain DYNC2H1 homodimer and a number of DYNC2LI1 light intermediate chains. Detected in brain, lung, spleen and kidney (at protein level). Enriched in the ependymal layer lining the lateral ventricles (at protein level).

It is found in the cytoplasm. It localises to the cytoskeleton. Its subcellular location is the cilium axoneme. The protein localises to the cell membrane. In terms of biological role, may function as a motor for intraflagellar retrograde transport. Functions in cilia biogenesis. According to PubMed:8666668, it may play a role in transport between endoplasmic reticulum and Golgi or organization of the Golgi in cells. This is Cytoplasmic dynein 2 heavy chain 1 (Dync2h1) from Mus musculus (Mouse).